The sequence spans 114 residues: Ig heavy chain V region (114 aa).

The Ig-like domain maps to 1 to 106 (EVQLQQSGAE…AVRVISRYFD (106 aa)).

The sequence is that of Ig heavy chain V region from Mus musculus (Mouse).